Consider the following 151-residue polypeptide: uncharacterized protein (151 aa).

The disordered stretch occupies residues 122–151 (GVAQRQVPTTGTHSFFHCTSEGNKEKPHHF).

This is an uncharacterized protein from Homo sapiens (Human).